Reading from the N-terminus, the 276-residue chain is Large ribosomal subunit protein uL2 (276 aa).

Residues 218–255 are disordered; it reads PTVRGSAMNPCDHPHGGGEGRTPIGMSSPVTPWGKPAL.

This sequence belongs to the universal ribosomal protein uL2 family. As to quaternary structure, part of the 50S ribosomal subunit. Forms a bridge to the 30S subunit in the 70S ribosome.

Functionally, one of the primary rRNA binding proteins. Required for association of the 30S and 50S subunits to form the 70S ribosome, for tRNA binding and peptide bond formation. It has been suggested to have peptidyltransferase activity; this is somewhat controversial. Makes several contacts with the 16S rRNA in the 70S ribosome. In Clostridium tetani (strain Massachusetts / E88), this protein is Large ribosomal subunit protein uL2.